A 336-amino-acid chain; its full sequence is Dihydroorotate dehydrogenase (quinone) (336 aa).

FMN is bound by residues 62–66 (AGLDK) and Thr86. Residue Lys66 participates in substrate binding. 111–115 (NRMGF) serves as a coordination point for substrate. Positions 139 and 172 each coordinate FMN. Asn172 lines the substrate pocket. Ser175 serves as the catalytic Nucleophile. Asn177 contacts substrate. FMN is bound by residues Lys217 and Thr245. 246–247 (NT) serves as a coordination point for substrate. Residues Gly268, Gly297, and 318 to 319 (YS) contribute to the FMN site.

This sequence belongs to the dihydroorotate dehydrogenase family. Type 2 subfamily. Monomer. FMN serves as cofactor.

It is found in the cell membrane. The catalysed reaction is (S)-dihydroorotate + a quinone = orotate + a quinol. The protein operates within pyrimidine metabolism; UMP biosynthesis via de novo pathway; orotate from (S)-dihydroorotate (quinone route): step 1/1. Functionally, catalyzes the conversion of dihydroorotate to orotate with quinone as electron acceptor. In Cronobacter sakazakii (strain ATCC BAA-894) (Enterobacter sakazakii), this protein is Dihydroorotate dehydrogenase (quinone).